A 253-amino-acid chain; its full sequence is MEHQTTPKQKTKEKSKGNKTKFVGVRQRPSGKWVAEIKDTTQKIRMWLGTFETAEEAARAYDEAACLLRGSNTRTNFANHFPNNSQLSLKIRNLLHQKQSMKQQQQQQHKPVSSLTDCNINYISTATSLTTTTTTTTTTAIPLNNVYRPDSSVIGQPETEGLQLPYSWPLVSGFNHQIPLAQAGGETHGHLNDHYSTDQHLGLAEIERQISASLYAMNGANSYYDNMNAEYAIFDPTDPIWDLPSLSQLFCPT.

Residues 21-78 constitute a DNA-binding region (AP2/ERF); the sequence is KFVGVRQRPSGKWVAEIKDTTQKIRMWLGTFETAEEAARAYDEAACLLRGSNTRTNFA.

This sequence belongs to the AP2/ERF transcription factor family. ERF subfamily.

The protein localises to the nucleus. In terms of biological role, probably acts as a transcriptional activator. Binds to the GCC-box pathogenesis-related promoter element. May be involved in the regulation of gene expression by stress factors and by components of stress signal transduction pathways. The chain is Ethylene-responsive transcription factor RAP2-11 (RAP2-11) from Arabidopsis thaliana (Mouse-ear cress).